We begin with the raw amino-acid sequence, 200 residues long: 3-isopropylmalate dehydratase small subunit (200 aa).

Belongs to the LeuD family. LeuD type 1 subfamily. In terms of assembly, heterodimer of LeuC and LeuD.

The enzyme catalyses (2R,3S)-3-isopropylmalate = (2S)-2-isopropylmalate. Its pathway is amino-acid biosynthesis; L-leucine biosynthesis; L-leucine from 3-methyl-2-oxobutanoate: step 2/4. In terms of biological role, catalyzes the isomerization between 2-isopropylmalate and 3-isopropylmalate, via the formation of 2-isopropylmaleate. This chain is 3-isopropylmalate dehydratase small subunit, found in Actinobacillus pleuropneumoniae serotype 5b (strain L20).